Here is an 86-residue protein sequence, read N- to C-terminus: U15-lycotoxin-Ls1g (86 aa).

Residues 1–20 (MNSKIFAVLLLLGLLSCVLS) form the signal peptide. The 46-residue stretch at 21 to 66 (DQYCPKSSITACKKMNIRNDCCKDDDCTGGSWCCATPCGNFCKYPA) folds into the WAP domain. 5 disulfide bridges follow: C24/C54, C32/C58, C41/C53, C42/C80, and C47/C62.

Belongs to the venom protein 11 family. 01 (wap-1) subfamily. Contains 5 disulfide bonds. In terms of tissue distribution, expressed by the venom gland.

Its subcellular location is the secreted. In terms of biological role, has antibacterial activity. The chain is U15-lycotoxin-Ls1g from Lycosa singoriensis (Wolf spider).